Reading from the N-terminus, the 348-residue chain is EGF-like domain containing protein 1 (348 aa).

Residues M1–C19 form the signal peptide. The EGF-like domain occupies T60–E92. 3 disulfides stabilise this stretch: C64/C74, C68/C80, and C82/C91. Residues R99–Q342 enclose the ZP domain.

Prismatic layer of shell (at protein level). Expressed primarily in the mantle with highest level in the mantle edge and lower level in the mantle pallium.

It is found in the secreted. This is EGF-like domain containing protein 1 from Margaritifera margaritifera (Freshwater pearl mussel).